A 190-amino-acid chain; its full sequence is Lipid A acyltransferase PagP (190 aa).

The signal sequence occupies residues 1 to 18 (MKRLISCLTIICALNASA). Active-site residues include His-60, Asp-103, and Ser-104.

Belongs to the lipid A palmitoyltransferase family. Homodimer.

The protein localises to the cell outer membrane. The catalysed reaction is a lipid A + a 1,2-diacyl-sn-glycero-3-phosphocholine = a hepta-acyl lipid A + a 2-acyl-sn-glycero-3-phosphocholine. It carries out the reaction a lipid IVA + a 1,2-diacyl-sn-glycero-3-phosphocholine = a lipid IVB + a 2-acyl-sn-glycero-3-phosphocholine. It catalyses the reaction a lipid IIA + a 1,2-diacyl-sn-glycero-3-phosphocholine = a lipid IIB + a 2-acyl-sn-glycero-3-phosphocholine. Transfers a fatty acid residue from the sn-1 position of a phospholipid to the N-linked hydroxyfatty acid chain on the proximal unit of lipid A or its precursors. The chain is Lipid A acyltransferase PagP from Legionella pneumophila (strain Corby).